The sequence spans 266 residues: tRNA dimethylallyltransferase (266 aa).

This sequence belongs to the IPP transferase family. Monomer. The cofactor is Mg(2+).

The catalysed reaction is adenosine(37) in tRNA + dimethylallyl diphosphate = N(6)-dimethylallyladenosine(37) in tRNA + diphosphate. Catalyzes the transfer of a dimethylallyl group onto the adenine at position 37 in tRNAs that read codons beginning with uridine, leading to the formation of N6-(dimethylallyl)adenosine (i(6)A). The sequence is that of tRNA dimethylallyltransferase (miaA) from Helicobacter acinonychis (strain Sheeba).